Consider the following 137-residue polypeptide: Nucleoside diphosphate kinase (137 aa).

ATP contacts are provided by Lys-9, Phe-58, Arg-86, Thr-92, Arg-103, and Asn-113. His-121 (pros-phosphohistidine intermediate) is an active-site residue.

It belongs to the NDK family. Homotetramer. Mg(2+) serves as cofactor.

Its subcellular location is the cytoplasm. The catalysed reaction is a 2'-deoxyribonucleoside 5'-diphosphate + ATP = a 2'-deoxyribonucleoside 5'-triphosphate + ADP. It catalyses the reaction a ribonucleoside 5'-diphosphate + ATP = a ribonucleoside 5'-triphosphate + ADP. Its function is as follows. Major role in the synthesis of nucleoside triphosphates other than ATP. The ATP gamma phosphate is transferred to the NDP beta phosphate via a ping-pong mechanism, using a phosphorylated active-site intermediate. The sequence is that of Nucleoside diphosphate kinase from Streptococcus pneumoniae (strain P1031).